The sequence spans 391 residues: Nucleosome assembly protein 1-like 1 (391 aa).

Met1 is modified (N-acetylmethionine). Positions 1-10 (MADIDNKEQS) are enriched in basic and acidic residues. A disordered region spans residues 1 to 32 (MADIDNKEQSELDQDLDDVEEVEEEETGEETK). Ala2 carries the post-translational modification N-acetylalanine. Residue Ser10 is modified to Phosphoserine. Residues 11–28 (ELDQDLDDVEEVEEEETG) show a composition bias toward acidic residues. Residues Thr62 and Thr64 each carry the phosphothreonine modification. Ser69 is subject to Phosphoserine. Lys116 bears the N6-acetyllysine mark. The short motif at 125–150 (YEPTEEECEWKPDEEDEISEELKEKA) is the NAP1L motif element. A compositionally biased stretch (acidic residues) spans 132–143 (CEWKPDEEDEIS). A disordered region spans residues 132–163 (CEWKPDEEDEISEELKEKAKIEDEKKDEEKED). Ser143 bears the Phosphoserine mark. Residues 144 to 163 (EELKEKAKIEDEKKDEEKED) are compositionally biased toward basic and acidic residues. The short motif at 273 to 279 (IKKKQKH) is the Nuclear localization signal element. The span at 346 to 376 (AIEDDDDDYDEEGEEADEEGEEEGDEENDPD) shows a compositional bias: acidic residues. Residues 346 to 391 (AIEDDDDDYDEEGEEADEEGEEEGDEENDPDYDPKKDQNPAECKQQ) form a disordered region. A compositionally biased stretch (basic and acidic residues) spans 377-391 (YDPKKDQNPAECKQQ). Cys388 carries the cysteine methyl ester modification. Cys388 is lipidated: S-farnesyl cysteine. A propeptide spans 389 to 391 (KQQ) (removed in mature form).

The protein belongs to the nucleosome assembly protein (NAP) family. As to quaternary structure, homodimer. The dimer binds strongly and sequentially to single and double H2A-H2B heterodimers. Interacts with ERCC6; this interaction increases ERCC6 processivity. Interacts with RAD54. Interacts with SETD1A. In terms of assembly, (Microbial infection) Interacts with human herpesvirus 8 protein LANA1 (via N-terminus); this interaction is required for LANA1-dependent DNA replication. (Microbial infection) Interacts with hepatitis virus protein NS5A (via C-terminus); this interaction sequesters NAP1L1 in the cytoplasm, blocking its nuclear translocation. As to quaternary structure, (Microbial infection) Interacts with Chikungunya virus non-structural protein 3 (via C-terminus). Post-translationally, monoglycylated on glutamate residues. Cannot be polyglycylated due to the absence of functional TTLL10 in human. Polyglutamylated by TTLL4 on glutamate residues, resulting in polyglutamate chains on the gamma-carboxyl group. Both polyglutamylation and monoglycylation modifications can coexist on the same protein on adjacent residues, and lowering polyglycylation levels increases polyglutamylation, and reciprocally. In terms of tissue distribution, ubiquitously expressed.

Its subcellular location is the nucleus. The protein resides in the melanosome. It is found in the cytoplasm. Its function is as follows. Histone chaperone that plays a role in the nuclear import of H2A-H2B and nucleosome assembly. Also participates in several important DNA repair mechanisms: greatly enhances ERCC6-mediated chromatin remodeling which is essential for transcription-coupled nucleotide excision DNA repair. Also stimulates homologous recombination (HR) by RAD51 and RAD54 which is essential in mitotic DNA double strand break (DSB) repair. Plays a key role in the regulation of embryonic neurogenesis. Promotes the proliferation of neural progenitors and inhibits neuronal differentiation during cortical development. Regulates neurogenesis via the modulation of RASSF10; regulates RASSF10 expression by promoting SETD1A-mediated H3K4 methylation at the RASSF10 promoter. Functionally, (Microbial infection) Positively regulates Epstein-Barr virus reactivation in epithelial cells through the induction of viral BZLF1 expression. In terms of biological role, (Microbial infection) Together with human herpesvirus 8 protein LANA1, assists the proper assembly of the nucleosome on the replicated viral DNA. The polypeptide is Nucleosome assembly protein 1-like 1 (NAP1L1) (Homo sapiens (Human)).